Reading from the N-terminus, the 154-residue chain is 6,7-dimethyl-8-ribityllumazine synthase (154 aa).

Residues Phe-22, 56-58 (AFE), and 80-82 (AVI) contribute to the 5-amino-6-(D-ribitylamino)uracil site. 85–86 (AT) contributes to the (2S)-2-hydroxy-3-oxobutyl phosphate binding site. His-88 serves as the catalytic Proton donor. Phe-113 is a binding site for 5-amino-6-(D-ribitylamino)uracil. Arg-127 is a (2S)-2-hydroxy-3-oxobutyl phosphate binding site.

Belongs to the DMRL synthase family.

It carries out the reaction (2S)-2-hydroxy-3-oxobutyl phosphate + 5-amino-6-(D-ribitylamino)uracil = 6,7-dimethyl-8-(1-D-ribityl)lumazine + phosphate + 2 H2O + H(+). It functions in the pathway cofactor biosynthesis; riboflavin biosynthesis; riboflavin from 2-hydroxy-3-oxobutyl phosphate and 5-amino-6-(D-ribitylamino)uracil: step 1/2. Catalyzes the formation of 6,7-dimethyl-8-ribityllumazine by condensation of 5-amino-6-(D-ribitylamino)uracil with 3,4-dihydroxy-2-butanone 4-phosphate. This is the penultimate step in the biosynthesis of riboflavin. This chain is 6,7-dimethyl-8-ribityllumazine synthase, found in Clostridium botulinum (strain ATCC 19397 / Type A).